A 159-amino-acid polypeptide reads, in one-letter code: Eukaryotic translation initiation factor 5A (159 aa).

A compositionally biased stretch (basic and acidic residues) spans 1 to 12 (MSDEEHQFESKA). The tract at residues 1–23 (MSDEEHQFESKADAGASKTYPQQ) is disordered. Lysine 52 is subject to Hypusine.

It belongs to the eIF-5A family. In terms of processing, lys-52 undergoes hypusination, a unique post-translational modification that consists in the addition of a butylamino group from spermidine to lysine side chain, leading to the formation of the unusual amino acid hypusine. eIF-5As are the only known proteins to undergo this modification, which is essential for their function.

Translation factor that promotes translation elongation and termination, particularly upon ribosome stalling at specific amino acid sequence contexts. Binds between the exit (E) and peptidyl (P) site of the ribosome and promotes rescue of stalled ribosome: specifically required for efficient translation of polyproline-containing peptides as well as other motifs that stall the ribosome. Acts as a ribosome quality control (RQC) cofactor by joining the RQC complex to facilitate peptidyl transfer during CAT tailing step. In Senecio vernalis (Spring groundsel), this protein is Eukaryotic translation initiation factor 5A (EIFSV1).